The following is a 353-amino-acid chain: Probable G-protein coupled receptor 139 (353 aa).

Topologically, residues Met-1–Pro-29 are extracellular. Asn-11 carries N-linked (GlcNAc...) asparagine glycosylation. The chain crosses the membrane as a helical span at residues Val-30–Ile-50. Over Leu-51–Tyr-65 the chain is Cytoplasmic. Residues Leu-66–Leu-86 traverse the membrane as a helical segment. Residues Leu-87–Lys-102 are Extracellular-facing. The chain crosses the membrane as a helical span at residues Ile-103–Thr-123. Topologically, residues Ile-124–Val-148 are cytoplasmic. A helical transmembrane segment spans residues Ile-149 to Ile-169. Topologically, residues Trp-170–His-181 are extracellular. The chain crosses the membrane as a helical span at residues Val-182–Leu-202. Topologically, residues Asn-203–Ala-228 are cytoplasmic. Residues Ile-229 to Leu-249 traverse the membrane as a helical segment. The Extracellular portion of the chain corresponds to Tyr-250 to Asp-268. A helical transmembrane segment spans residues Ile-269 to Ser-289. The Cytoplasmic portion of the chain corresponds to Lys-290–Pro-353.

Belongs to the G-protein coupled receptor 1 family. Expressed almost exclusively in the brain. Detected at very low levels in the peripheral tissues.

It is found in the cell membrane. Functionally, orphan receptor. Seems to act through a G(q/11)-mediated pathway. The chain is Probable G-protein coupled receptor 139 (GPR139) from Homo sapiens (Human).